Consider the following 181-residue polypeptide: Protein OPG005 (181 aa).

The chain is Protein OPG005 (OPG005) from Vaccinia virus (strain Copenhagen) (VACV).